The primary structure comprises 263 residues: Hydroxyethylthiazole kinase 2 (263 aa).

Position 42 (Met-42) interacts with substrate. ATP is bound by residues Lys-118 and Thr-164. Gly-191 is a substrate binding site.

The protein belongs to the Thz kinase family. The cofactor is Mg(2+).

It catalyses the reaction 5-(2-hydroxyethyl)-4-methylthiazole + ATP = 4-methyl-5-(2-phosphooxyethyl)-thiazole + ADP + H(+). It participates in cofactor biosynthesis; thiamine diphosphate biosynthesis; 4-methyl-5-(2-phosphoethyl)-thiazole from 5-(2-hydroxyethyl)-4-methylthiazole: step 1/1. Functionally, catalyzes the phosphorylation of the hydroxyl group of 4-methyl-5-beta-hydroxyethylthiazole (THZ). This is Hydroxyethylthiazole kinase 2 from Clostridium botulinum (strain Loch Maree / Type A3).